Consider the following 1098-residue polypeptide: Mediator of RNA polymerase II transcription subunit 5 (1098 aa).

The interval 1019–1041 is disordered; that stretch reads PDDVQKSADMKPDTGIKEDDSEK. Residues 1021–1041 show a composition bias toward basic and acidic residues; sequence DVQKSADMKPDTGIKEDDSEK.

It belongs to the Mediator complex subunit 5 family. Component of the Mediator complex.

Its subcellular location is the nucleus. Its function is as follows. Component of the Mediator complex, a coactivator involved in the regulated transcription of nearly all RNA polymerase II-dependent genes. Mediator functions as a bridge to convey information from gene-specific regulatory proteins to the basal RNA polymerase II transcription machinery. Mediator is recruited to promoters by direct interactions with regulatory proteins and serves as a scaffold for the assembly of a functional preinitiation complex with RNA polymerase II and the general transcription factors. In Eremothecium gossypii (strain ATCC 10895 / CBS 109.51 / FGSC 9923 / NRRL Y-1056) (Yeast), this protein is Mediator of RNA polymerase II transcription subunit 5 (NUT1).